Here is a 113-residue protein sequence, read N- to C-terminus: Urocortin-2 (113 aa).

An N-terminal signal peptide occupies residues 1–23 (MMTRWALVVFVVLMLDRILFVPG). Residues 24–71 (TPIPTFQLLPQNSLETTPSSVTSESSSGTTTGPSASWSNSKASPYLDT) constitute a propeptide that is removed on maturation. Positions 37 to 61 (LETTPSSVTSESSSGTTTGPSASWS) are enriched in low complexity. The interval 37 to 64 (LETTPSSVTSESSSGTTTGPSASWSNSK) is disordered. Residue Val-110 is modified to Valine amide; partial.

This sequence belongs to the sauvagine/corticotropin-releasing factor/urotensin I family. Binds with high affinity to CRF receptors 2-alpha and 2-beta. In terms of processing, glycosylated.

It is found in the secreted. Suppresses food intake, delays gastric emptying and decreases heat-induced edema. Might represent an endogenous ligand for maintaining homeostasis after stress. The polypeptide is Urocortin-2 (Ucn2) (Mus musculus (Mouse)).